Consider the following 1091-residue polypeptide: TATA element modulatory factor (1091 aa).

Disordered regions lie at residues I42–R86 and F100–S280. Residues W57–I81 are compositionally biased toward polar residues. A phosphoserine mark is found at S73, S78, S112, and S136. Composition is skewed to low complexity over residues K111–S122, S131–S142, and S194–T211. At S213 the chain carries Phosphoserine. The span at E217–Q234 shows a compositional bias: basic and acidic residues. Composition is skewed to low complexity over residues V242–S253 and I264–Q273. A phosphoserine mark is found at S324, S326, S329, S334, S340, and S357. An interaction with Elongin BC complex region spans residues S329–I338. The segment at T360–E443 is disordered. The segment covering S368 to N379 has biased composition (acidic residues). S411 and S540 each carry phosphoserine. Coiled coils occupy residues E443–R767 and I824–E894. Residues S923 and S926 each carry the phosphoserine modification. Phosphothreonine is present on T927. A Phosphoserine modification is found at S931. Residues I984–L1090 are a coiled coil.

In terms of assembly, component of the SNF/SWI transcription factor complexes. Interacts with RAB6A. Interacts with TCEB1. Interacts with STAT3 and FER. Interacts with TRNP1; may regulate TRNP1 proteasomal degradation. Phosphorylated by FER.

It localises to the cytoplasm. It is found in the nucleus. The protein resides in the golgi apparatus membrane. Potential coactivator of the androgen receptor. May play critical roles in two RAB6-dependent retrograde transport processes: one from endosomes to the Golgi and the other from the Golgi to the ER. Mediates STAT3 degradation. The chain is TATA element modulatory factor (Tmf1) from Mus musculus (Mouse).